The chain runs to 212 residues: Large ribosomal subunit protein uL3 (212 aa).

A compositionally biased stretch (polar residues) spans 140-155 (SVSHRAIGSTGQNQSP). The interval 140–166 (SVSHRAIGSTGQNQSPGKVFKGKKMPG) is disordered. Gln153 carries the post-translational modification N5-methylglutamine.

This sequence belongs to the universal ribosomal protein uL3 family. In terms of assembly, part of the 50S ribosomal subunit. Forms a cluster with proteins L14 and L19. Methylated by PrmB.

Its function is as follows. One of the primary rRNA binding proteins, it binds directly near the 3'-end of the 23S rRNA, where it nucleates assembly of the 50S subunit. This chain is Large ribosomal subunit protein uL3, found in Psychrobacter cryohalolentis (strain ATCC BAA-1226 / DSM 17306 / VKM B-2378 / K5).